A 180-amino-acid polypeptide reads, in one-letter code: Shikimate kinase (180 aa).

14-19 provides a ligand contact to ATP; the sequence is GAGKSS. S18 provides a ligand contact to Mg(2+). The substrate site is built by D36, R60, and G82. R120 is an ATP binding site. Position 139 (R139) interacts with substrate.

Belongs to the shikimate kinase family. Monomer. Mg(2+) serves as cofactor.

The protein resides in the cytoplasm. The catalysed reaction is shikimate + ATP = 3-phosphoshikimate + ADP + H(+). It participates in metabolic intermediate biosynthesis; chorismate biosynthesis; chorismate from D-erythrose 4-phosphate and phosphoenolpyruvate: step 5/7. Its function is as follows. Catalyzes the specific phosphorylation of the 3-hydroxyl group of shikimic acid using ATP as a cosubstrate. The chain is Shikimate kinase from Xylella fastidiosa (strain 9a5c).